The chain runs to 1528 residues: DNA topoisomerase 2-alpha (1528 aa).

At Met1 the chain carries N-acetylmethionine. Ser4 carries the phosphoserine modification. Lys17 participates in a covalent cross-link: Glycyl lysine isopeptide (Lys-Gly) (interchain with G-Cter in SUMO2). ATP-binding positions include Asn90, Asn119, and Ser147–Asn149. Glycyl lysine isopeptide (Lys-Gly) (interchain with G-Cter in SUMO2) cross-links involve residues Lys155 and Lys156. Gly160 to Lys167 contacts ATP. Thr281 carries the post-translational modification Phosphothreonine. The segment at Lys341 to Lys343 is interaction with DNA. Lys351 is covalently cross-linked (Glycyl lysine isopeptide (Lys-Gly) (interchain with G-Cter in SUMO2)). Gln375–Lys377 contacts ATP. Glycyl lysine isopeptide (Lys-Gly) (interchain with G-Cter in SUMO2) cross-links involve residues Lys385, Lys396, Lys415, Lys417, Lys424, and Lys439. The Toprim domain occupies Cys454–Glu571. Glu460 contributes to the Mg(2+) binding site. Glycyl lysine isopeptide (Lys-Gly) (interchain with G-Cter in SUMO2) cross-links involve residues Lys465, Lys479, and Lys528. Asp540 and Asp542 together coordinate Mg(2+). Residues Lys583, Lys598, Lys613, Lys621, Lys624, Lys631, Lys638, Lys654, Lys661, and Lys675 each participate in a glycyl lysine isopeptide (Lys-Gly) (interchain with G-Cter in SUMO2) cross-link. The 455-residue stretch at Ile714–Leu1168 folds into the Topo IIA-type catalytic domain. Catalysis depends on Tyr804, which acts as the O-(5'-phospho-DNA)-tyrosine intermediate. Residues Lys989–Ser998 form an interaction with DNA region. Lys1074 is covalently cross-linked (Glycyl lysine isopeptide (Lys-Gly) (interchain with G-Cter in SUMO2)). Disordered regions lie at residues Lys1090–Ala1118 and Lys1183–Ser1211. The segment covering Asp1098 to Thr1107 has biased composition (acidic residues). A Phosphoserine; by CK1 modification is found at Ser1105. Residues Glu1108–Ala1118 show a composition bias toward low complexity. Glycyl lysine isopeptide (Lys-Gly) (interchain with G-Cter in SUMO2) cross-links involve residues Lys1193 and Lys1201. Ser1211 is modified (phosphoserine). Lys1226 participates in a covalent cross-link: Glycyl lysine isopeptide (Lys-Gly) (interchain with G-Cter in SUMO2). A disordered region spans residues Ala1229–Phe1528. Residue Lys1238 forms a Glycyl lysine isopeptide (Lys-Gly) (interchain with G-Cter in SUMO1); alternate linkage. A Glycyl lysine isopeptide (Lys-Gly) (interchain with G-Cter in SUMO2); alternate cross-link involves residue Lys1238. Residue Thr1245 is modified to Phosphothreonine. Basic and acidic residues predominate over residues Gln1258–Ala1270. Residues Lys1272, Lys1279, and Lys1282 each participate in a glycyl lysine isopeptide (Lys-Gly) (interchain with G-Cter in SUMO2) cross-link. Phosphoserine occurs at positions 1291, 1293, 1295, and 1298. Residues Asp1296 to Val1306 are compositionally biased toward low complexity. The residue at position 1323 (Thr1323) is a Phosphothreonine. The span at Leu1326–Leu1345 shows a compositional bias: acidic residues. Ser1328 and Ser1333 each carry phosphoserine. A Phosphothreonine modification is found at Thr1350. Residues Lys1359 and Lys1363 each participate in a glycyl lysine isopeptide (Lys-Gly) (interchain with G-Cter in SUMO2) cross-link. Phosphoserine occurs at positions 1370 and 1373. A Glycyl lysine isopeptide (Lys-Gly) (interchain with G-Cter in SUMO2) cross-link involves residue Lys1382. Phosphoserine occurs at positions 1384 and 1388. A Glycyl lysine isopeptide (Lys-Gly) (interchain with G-Cter in SUMO2); alternate cross-link involves residue Lys1418. Lys1418 is subject to N6-acetyllysine; alternate. The interaction with PLSCR1 stretch occupies residues Lys1429–Lys1435. Lys1438 participates in a covalent cross-link: Glycyl lysine isopeptide (Lys-Gly) (interchain with G-Cter in SUMO2); alternate. Position 1438 is an N6-acetyllysine; alternate (Lys1438). Glycyl lysine isopeptide (Lys-Gly) (interchain with G-Cter in SUMO2) cross-links involve residues Lys1450 and Lys1455. Phosphoserine occurs at positions 1465, 1467, 1470, and 1472. Residues Lys1480 and Lys1488 each participate in a glycyl lysine isopeptide (Lys-Gly) (interchain with G-Cter in SUMO2) cross-link. Residues Ala1506–Glu1519 show a composition bias toward basic and acidic residues. Position 1521 is a phosphoserine (Ser1521).

This sequence belongs to the type II topoisomerase family. In terms of assembly, homodimer. Interacts with COPS5. Interacts with RECQL5; this stimulates DNA decatenation. Interacts with SETMAR; stimulates the topoisomerase activity. Interacts with DHX9; this interaction occurs in a E2 enzyme UBE2I- and RNA-dependent manner, negatively regulates DHX9-mediated double-stranded DNA and RNA duplex helicase activity and stimulates TOP2A-mediated supercoiled DNA relaxation activity. Interacts with HNRNPU (via C-terminus); this interaction protects the topoisomerase TOP2A from degradation and positively regulates the relaxation of supercoiled DNA in a RNA-dependent manner. Interacts with MCM3AP. Interacts with ERCC6. Interacts with PLSCR1. Interacts with GCNA; this interaction allows the resolution of topoisomerase II (TOP2A) DNA-protein cross-links. Interacts with POL1RA/RPA1 (via dock II) and UBTF in the context of Pol I complex; may assist Pol I transcription initiation by releasing supercoils occurring during DNA unwinding. Interacts with TPRN; TPRN interacts with a number of DNA damage response proteins, is recruited to sites of DNA damage and may play a role in DNA damage repair. Mg(2+) serves as cofactor. Requires Mn(2+) as cofactor. It depends on Ca(2+) as a cofactor. In terms of processing, phosphorylation has no effect on catalytic activity. However, phosphorylation at Ser-1105 by CSNK1D/CK1 promotes DNA cleavable complex formation.

The protein localises to the cytoplasm. The protein resides in the nucleus. Its subcellular location is the nucleoplasm. It is found in the nucleolus. It carries out the reaction ATP-dependent breakage, passage and rejoining of double-stranded DNA.. In terms of biological role, key decatenating enzyme that alters DNA topology by binding to two double-stranded DNA molecules, generating a double-stranded break in one of the strands, passing the intact strand through the broken strand, and religating the broken strand. May play a role in regulating the period length of BMAL1 transcriptional oscillation. This chain is DNA topoisomerase 2-alpha (Top2a), found in Mus musculus (Mouse).